We begin with the raw amino-acid sequence, 376 residues long: Probable low-specificity L-threonine aldolase (376 aa).

Over residues 1–21 the composition is skewed to polar residues; the sequence is MSGSVTSTTTETRLCPSNQGS. The interval 1–22 is disordered; that stretch reads MSGSVTSTTTETRLCPSNQGSA. Lys226 is subject to N6-(pyridoxal phosphate)lysine.

The protein belongs to the threonine aldolase family. In terms of assembly, homotetramer. Pyridoxal 5'-phosphate is required as a cofactor.

It catalyses the reaction L-threonine = acetaldehyde + glycine. The catalysed reaction is L-allo-threonine = acetaldehyde + glycine. It functions in the pathway amino-acid degradation; L-threonine degradation via aldolase pathway; acetaldehyde and glycine from L-threonine: step 1/1. The polypeptide is Probable low-specificity L-threonine aldolase (gly1) (Schizosaccharomyces pombe (strain 972 / ATCC 24843) (Fission yeast)).